Reading from the N-terminus, the 549-residue chain is MSPSKMNATVGSTSEVEQKIRQELALSDEVTTIRRNAPAAVLYEDGLKENKTVISSSGALIAYSGVKTGRSPKDKRIVEEPTSKDEIWWGPVNKPCSERTWSINRERAADYLRTRDHIYIVDAFAGWDPKYRIKVRVVCARAYHALFMTNMLIRPTEEELAHFGEPDFTVWNAGQFPANLHTQDMSSKSTIEINFKAMEMIILGTEYAGEMKKGIFTVMFYLMPVHHNVLTLHSSANQGIQNGDVTLFFGLSGTGKTTLSADPHRLLIGDDEHCWSDHGVFNIEGGCYAKCINLSAEKEPEIFDAIKFGSVLENVIYDEKSHVVDYDDSSITENTRCAYPIDYIPSAKIPCLADSHPKNIILLTCDASGVLPPVSKLTPEQVMYHFISGYTSKMAGTEQGVTEPEPTFSSCFGQPFLALHPIRYATMLATKMSQHKANAYLINTGWTGSSYVSGGKRCPLKYTRAILDSIHDGSLANETYETLPIFNLQVPTKVNGVPAELLNPAKNWSQGESKYRGAVTNLANLFVQNFKIYQDRATPDVLAAGPQFE.

Residue 250–257 (GLSGTGKT) coordinates ATP.

This sequence belongs to the phosphoenolpyruvate carboxykinase (ATP) family. As to quaternary structure, homotetramer.

The enzyme catalyses oxaloacetate + ATP = phosphoenolpyruvate + ADP + CO2. The protein operates within carbohydrate biosynthesis; gluconeogenesis. The sequence is that of Phosphoenolpyruvate carboxykinase (ATP) (PCK1) from Saccharomyces cerevisiae (strain ATCC 204508 / S288c) (Baker's yeast).